A 397-amino-acid polypeptide reads, in one-letter code: Acetate kinase (397 aa).

Asn-8 is a Mg(2+) binding site. An ATP-binding site is contributed by Lys-15. A substrate-binding site is contributed by Arg-89. The active-site Proton donor/acceptor is the Asp-146. Residues His-206–Gly-210, Asp-281–Arg-283, and Gly-329–Asn-333 each bind ATP. Mg(2+) is bound at residue Glu-382.

Belongs to the acetokinase family. Homodimer. Mg(2+) serves as cofactor. It depends on Mn(2+) as a cofactor.

Its subcellular location is the cytoplasm. It catalyses the reaction acetate + ATP = acetyl phosphate + ADP. It functions in the pathway metabolic intermediate biosynthesis; acetyl-CoA biosynthesis; acetyl-CoA from acetate: step 1/2. Catalyzes the formation of acetyl phosphate from acetate and ATP. Can also catalyze the reverse reaction. The chain is Acetate kinase from Bacillus cereus (strain ATCC 14579 / DSM 31 / CCUG 7414 / JCM 2152 / NBRC 15305 / NCIMB 9373 / NCTC 2599 / NRRL B-3711).